Here is a 472-residue protein sequence, read N- to C-terminus: Probable endopolygalacturonase D (472 aa).

The first 16 residues, 1–16 (MKRGALLVPFVPLALA), serve as a signal peptide directing secretion. The N-linked (GlcNAc...) asparagine glycan is linked to Asn-24. A disulfide bond links Cys-129 and Cys-144. PbH1 repeat units follow at residues 236–258 (MYYS…DIEH), 259–297 (TENL…DIKS), and 298–319 (STNL…AVSS). A glycan (N-linked (GlcNAc...) asparagine) is linked at Asn-300. Asp-312 (proton donor) is an active-site residue. A disulfide bridge connects residues Cys-314 and Cys-330. The active site involves His-334. 4 PbH1 repeats span residues 349–370 (VDGV…RIKS), 378–400 (VSNI…DIQQ), 412–433 (TNGV…SDGK), and 444–467 (CSNF…YPTD). N-linked (GlcNAc...) asparagine glycans are attached at residues Asn-361, Asn-385, and Asn-419. 2 disulfide bridges follow: Cys-439/Cys-444 and Cys-462/Cys-469.

Belongs to the glycosyl hydrolase 28 family.

It localises to the secreted. It carries out the reaction (1,4-alpha-D-galacturonosyl)n+m + H2O = (1,4-alpha-D-galacturonosyl)n + (1,4-alpha-D-galacturonosyl)m.. Its function is as follows. Involved in maceration and soft-rotting of plant tissue. Hydrolyzes the 1,4-alpha glycosidic bonds of de-esterified pectate in the smooth region of the plant cell wall. The sequence is that of Probable endopolygalacturonase D (pgaD) from Neosartorya fischeri (strain ATCC 1020 / DSM 3700 / CBS 544.65 / FGSC A1164 / JCM 1740 / NRRL 181 / WB 181) (Aspergillus fischerianus).